The chain runs to 624 residues: MSPVASTCLLCEMRTVVWGWQPAVPQPWHFVRFASSARLARRKPARMALSPNVARSSDRFKDSKKKKPPPTFKNNPFGGMNQTRARLPDRPIPRSDAELKRSSSDLNNKEKDAADKKQDGSLFRALKMQIALSPIPYSRRNRIKEKIAAVTSFDQFPLLPQVREAVYANAFPTLTEISPTPIQRVAIPALLRPPISETEKNKRKKKPQEEEEEELFHFDQFLLAAETGTGKTLAYLLPIINWIKQAEMVEKDTELMDNGEKQQGVTEKSKENLFELEAPELATPEHSNVARPRAIILVPTAELVEQVGKLAKQLSHTAKFRSATISSVYTPRRITNSLFNPAGIDILISTPHLLTSIAKTNPYILSRVAHLVIDEADSLLDKSFSPLTYSIMEKTAPSLTQLILCSATIPRSLDSVMEKKFPEMKRLVTPNLHAIPRRVQLGVVDVDKDPSRGNKKLACADIIWSLGKAGEVAAFLSQKGIHTAALSRDTPDQRKDEILAEFTHVKPLPTPQEVKDAQRNKRNWFSDPVPFATGENSHLGPQRNLRDTKVLVTTDLGSRGIDTVAVRNVILFDVPHTTIDFIHRLGRTGRMGRRGRGIVLVSKKDRKDVVKEVREAMFRGQALI.

The N-terminal 43 residues, 1–43 (MSPVASTCLLCEMRTVVWGWQPAVPQPWHFVRFASSARLARRK), are a transit peptide targeting the mitochondrion. Residues 41 to 120 (RRKPARMALS…KDAADKKQDG (80 aa)) form a disordered region. Residues 86 to 119 (RLPDRPIPRSDAELKRSSSDLNNKEKDAADKKQD) show a composition bias toward basic and acidic residues. A Q motif motif is present at residues 151-184 (TSFDQFPLLPQVREAVYANAFPTLTEISPTPIQR). Residues 212–427 (EEELFHFDQF…EKKFPEMKRL (216 aa)) form the Helicase ATP-binding domain. An ATP-binding site is contributed by 225–232 (AETGTGKT). A DEAD box motif is present at residues 374-377 (DEAD). Residues 438–624 (RVQLGVVDVD…EAMFRGQALI (187 aa)) enclose the Helicase C-terminal domain.

Belongs to the DEAD box helicase family. MRH4 subfamily.

The protein resides in the mitochondrion. The catalysed reaction is ATP + H2O = ADP + phosphate + H(+). Functionally, ATP-binding RNA helicase involved in mitochondrial RNA metabolism. Required for maintenance of mitochondrial DNA. The protein is ATP-dependent RNA helicase MRH4, mitochondrial (MRH4) of Ajellomyces capsulatus (strain NAm1 / WU24) (Darling's disease fungus).